A 377-amino-acid polypeptide reads, in one-letter code: MNKKEDYYKILGIDKSANEKEIKKAYRKLAMEHHPDRSSSKESEAKMREINEAYEVLSNPEKKAIYDKYGHEAANNPGFNGFNAGSAGFGNFGGFSNFGGFDSIFEEFFGGSRSHSKQNSNYPYPGESYSTQVKISFLDSVHGRVISQKLDKYKDCESCNGTGARSKSDIKTCSTCNGRGSVEKLVNSLFGKIKQSVTCSTCNGLGQEITHKCPSCKGAKKIKESISQKISIPAGVISGQEVLLRGFGGPGFNGGPNGDLYIRVYVTEHPYYQRINDDIYVDFPISIVNLILEKPVVVPTPYGDEKIKIKSTFKNDQIITFKGKGFKRKNRVGDLKIRLKFEIPNFSSKVKKNLESLLSETNDSINEDFVKKVNSIK.

The J domain occupies 6-70; sequence DYYKILGIDK…EKKAIYDKYG (65 aa). The CR-type zinc-finger motif lies at 143–225; it reads GRVISQKLDK…CKGAKKIKES (83 aa). Positions 156, 159, 173, 176, 199, 202, 213, and 216 each coordinate Zn(2+). CXXCXGXG motif repeat units lie at residues 156–163, 173–180, 199–206, and 213–220; these read CESCNGTG, CSTCNGRG, CSTCNGLG, and CPSCKGAK.

It belongs to the DnaJ family. In terms of assembly, homodimer. Zn(2+) serves as cofactor.

It localises to the cytoplasm. Participates actively in the response to hyperosmotic and heat shock by preventing the aggregation of stress-denatured proteins and by disaggregating proteins, also in an autonomous, DnaK-independent fashion. Unfolded proteins bind initially to DnaJ; upon interaction with the DnaJ-bound protein, DnaK hydrolyzes its bound ATP, resulting in the formation of a stable complex. GrpE releases ADP from DnaK; ATP binding to DnaK triggers the release of the substrate protein, thus completing the reaction cycle. Several rounds of ATP-dependent interactions between DnaJ, DnaK and GrpE are required for fully efficient folding. Also involved, together with DnaK and GrpE, in the DNA replication of plasmids through activation of initiation proteins. In Mycoplasmopsis pulmonis (strain UAB CTIP) (Mycoplasma pulmonis), this protein is Chaperone protein DnaJ.